Here is a 399-residue protein sequence, read N- to C-terminus: MTGLNSLDLPGRPEDTRVVVAMSGGVDSSVTAALLKEQGYDVVGITLQLYDHGAAVSRKGACCAGQDIQDARRVADQIGIPHYVLDYEDRFRRAVMDDFADSYAAGETPIPCVRCNERVKFRDLLDTARDLGAAALATGHYIASRRGAAGRELHRPRDEERDQSYFLFATTQEQLEFLRFPLGELTKPEARALADRMGLEVAGKPDSQDICFVPTGRYTTIVEKLRPGASAPGEVVHLDGRVLGRHSGIVNFTIGQRRGLGIGASEPVSEPLFVVKLDPLKRQVIVGPREALETQKLTLRDINWLGDGPFAELPGEGLKIVAKVRSTRPPVPARLFRTGEGAVVELLESEGGVAPGQACVFYDGGGGQRVLGGGWIVRTESCWQVPEAGTSRVAAPTAD.

Residues Ala-21–Ser-28 and Leu-47 each bind ATP. The Nucleophile role is filled by Cys-115. The cysteines at positions 115 and 211 are disulfide-linked. Gly-139 provides a ligand contact to ATP. Positions Arg-161 to Gln-163 are interaction with tRNA. The Cysteine persulfide intermediate role is filled by Cys-211.

The protein belongs to the MnmA/TRMU family.

The protein localises to the cytoplasm. The enzyme catalyses S-sulfanyl-L-cysteinyl-[protein] + uridine(34) in tRNA + AH2 + ATP = 2-thiouridine(34) in tRNA + L-cysteinyl-[protein] + A + AMP + diphosphate + H(+). Catalyzes the 2-thiolation of uridine at the wobble position (U34) of tRNA, leading to the formation of s(2)U34. This is tRNA-specific 2-thiouridylase MnmA from Parvibaculum lavamentivorans (strain DS-1 / DSM 13023 / NCIMB 13966).